A 197-amino-acid chain; its full sequence is Probable nicotinate-nucleotide adenylyltransferase (197 aa).

It belongs to the NadD family.

It catalyses the reaction nicotinate beta-D-ribonucleotide + ATP + H(+) = deamido-NAD(+) + diphosphate. The protein operates within cofactor biosynthesis; NAD(+) biosynthesis; deamido-NAD(+) from nicotinate D-ribonucleotide: step 1/1. Its function is as follows. Catalyzes the reversible adenylation of nicotinate mononucleotide (NaMN) to nicotinic acid adenine dinucleotide (NaAD). This is Probable nicotinate-nucleotide adenylyltransferase from Bordetella parapertussis (strain 12822 / ATCC BAA-587 / NCTC 13253).